We begin with the raw amino-acid sequence, 2109 residues long: General transcription factor 3C polypeptide 1 (2109 aa).

Positions 467 to 521 (LPEGEDTFLSESDSEEERSSSKRRGRGSQKDTRASANLRPKTQPHHSTPTKGGWK) are disordered. The span at 469–482 (EGEDTFLSESDSEE) shows a compositional bias: acidic residues. Lys-529 is covalently cross-linked (Glycyl lysine isopeptide (Lys-Gly) (interchain with G-Cter in SUMO2)). The interval 586–609 (MENPKESSSSLKTGRHSSGQDKPH) is disordered. Phosphoserine is present on Ser-667. Residues 718–727 (STANRVKTSQ) show a composition bias toward polar residues. Positions 718–775 (STANRVKTSQPPVPQGEAEEDSQGKEGPSGSGDSQLSASSRSESGRMKKSDNKMGITP) are disordered. Phosphoserine is present on Ser-739. Residues 748-759 (SGDSQLSASSRS) show a composition bias toward low complexity. The segment covering 760–769 (ESGRMKKSDN) has biased composition (basic and acidic residues). Residues Lys-770 and Lys-833 each participate in a glycyl lysine isopeptide (Lys-Gly) (interchain with G-Cter in SUMO2) cross-link. 2 disordered regions span residues 836-857 (SGRA…SEAP) and 1059-1082 (RKNS…ESAM). Residues Ser-1062 and Ser-1068 each carry the phosphoserine modification. Over residues 1073-1082 (SLQKEQESAM) the composition is skewed to basic and acidic residues. Residue Lys-1142 forms a Glycyl lysine isopeptide (Lys-Gly) (interchain with G-Cter in SUMO2) linkage. The segment at 1202–1241 (SLDRNRRVRGGKSQKRKRLKKDPGKKIKRKKKGEFPGEKS) is disordered. A compositionally biased stretch (basic residues) spans 1207–1221 (RRVRGGKSQKRKRLK). A phosphoserine mark is found at Ser-1253 and Ser-1611. Positions 1608–1631 (KDGSLEDDEDEEDDLDEGVGGKRR) are disordered. The segment covering 1612–1624 (LEDDEDEEDDLDE) has biased composition (acidic residues). Ser-1632 and Ser-1653 each carry phosphoserine. Over residues 1823–1833 (EDADIQREDPQ) the composition is skewed to basic and acidic residues. The tract at residues 1823-1961 (EDADIQREDP…GSEDPRGFTE (139 aa)) is disordered. Positions 1838–1848 (EGSSSEDSPPE) are enriched in low complexity. Residues Ser-1856, Ser-1865, Ser-1868, Ser-1896, and Ser-1911 each carry the phosphoserine modification. The segment covering 1916 to 1926 (LEDTAAAGAAQ) has biased composition (low complexity). Positions 1937-1947 (SPGQEQLSGQA) are enriched in polar residues. Residue Ser-1969 is modified to Phosphoserine.

It belongs to the TFIIIC subunit 1 family. As to quaternary structure, part of the TFIIIC subcomplex TFIIIC2, consisting of six subunits, GTF3C1, GTF3C2, GTF3C3, GTF3C4, GTF3C5 and GTF3C6. Interacts with IGHMBP2. Interacts with MAF1.

The protein resides in the nucleus. Functionally, required for RNA polymerase III-mediated transcription. Component of TFIIIC that initiates transcription complex assembly on tRNA and is required for transcription of 5S rRNA and other stable nuclear and cytoplasmic RNAs. Binds to the box B promoter element. The sequence is that of General transcription factor 3C polypeptide 1 (GTF3C1) from Homo sapiens (Human).